The chain runs to 131 residues: Small ribosomal subunit protein uS8 (131 aa).

Belongs to the universal ribosomal protein uS8 family. Part of the 30S ribosomal subunit. Contacts proteins S5 and S12.

Functionally, one of the primary rRNA binding proteins, it binds directly to 16S rRNA central domain where it helps coordinate assembly of the platform of the 30S subunit. The sequence is that of Small ribosomal subunit protein uS8 from Hydrogenovibrio crunogenus (strain DSM 25203 / XCL-2) (Thiomicrospira crunogena).